A 230-amino-acid chain; its full sequence is 3,4-dihydroxy-2-butanone 4-phosphate synthase (230 aa).

Residues 42 to 43 (RE), aspartate 47, 155 to 159 (RRGHT), and glutamate 179 contribute to the D-ribulose 5-phosphate site. Residue glutamate 43 participates in Mg(2+) binding. Histidine 158 contacts Mg(2+).

The protein belongs to the DHBP synthase family. As to quaternary structure, homodimer. It depends on Mg(2+) as a cofactor. Mn(2+) serves as cofactor.

It carries out the reaction D-ribulose 5-phosphate = (2S)-2-hydroxy-3-oxobutyl phosphate + formate + H(+). It participates in cofactor biosynthesis; riboflavin biosynthesis; 2-hydroxy-3-oxobutyl phosphate from D-ribulose 5-phosphate: step 1/1. In terms of biological role, catalyzes the conversion of D-ribulose 5-phosphate to formate and 3,4-dihydroxy-2-butanone 4-phosphate. The sequence is that of 3,4-dihydroxy-2-butanone 4-phosphate synthase from Bordetella pertussis (strain Tohama I / ATCC BAA-589 / NCTC 13251).